Here is a 415-residue protein sequence, read N- to C-terminus: Maintenance of mitochondrial morphology protein 1 (415 aa).

Over 1–18 the chain is Lumenal; the sequence is MADICPSRSEPTLSFTQG. A helical transmembrane segment spans residues 19–39; that stretch reads LILGQLSVVLLLAAFIKFFIF. Residues 40–415 lie on the Cytoplasmic side of the membrane; the sequence is GDPPSPEVVA…MPGSMPGSMP (376 aa). Residues 114–330 form the SMP-LTD domain; sequence QPESLDWFNV…EPRFQEIALP (217 aa). Basic and acidic residues predominate over residues 373–389; that stretch reads IEAEAHGGADRVPDSLR. The tract at residues 373–415 is disordered; the sequence is IEAEAHGGADRVPDSLRYRHRPRADEEFPGAGSMPGSMPGSMP. Positions 404–415 are enriched in low complexity; sequence GSMPGSMPGSMP.

Belongs to the MMM1 family. In terms of assembly, homodimer. Component of the ER-mitochondria encounter structure (ERMES) or MDM complex, composed of mmm-1, mdm10, mdm12 and mdm34. A mmm-1 homodimer associates with one molecule of mdm12 on each side in a pairwise head-to-tail manner, and the SMP-LTD domains of mmm-1 and mdm12 generate a continuous hydrophobic tunnel for phospholipid trafficking.

The protein resides in the endoplasmic reticulum membrane. Component of the ERMES/MDM complex, which serves as a molecular tether to connect the endoplasmic reticulum (ER) and mitochondria. Components of this complex are involved in the control of mitochondrial shape and protein biogenesis, and function in nonvesicular lipid trafficking between the ER and mitochondria. The mdm12-mmm-1 subcomplex functions in the major beta-barrel assembly pathway that is responsible for biogenesis of all outer membrane beta-barrel proteins, and acts in a late step after the SAM complex. The mdm10-mdm12-mmm-1 subcomplex further acts in the TOM40-specific pathway after the action of the mdm12-mmm-1 complex. Essential for establishing and maintaining the structure of mitochondria and maintenance of mtDNA nucleoids. This chain is Maintenance of mitochondrial morphology protein 1 (mmm-1), found in Neurospora crassa (strain ATCC 24698 / 74-OR23-1A / CBS 708.71 / DSM 1257 / FGSC 987).